Reading from the N-terminus, the 257-residue chain is Metallo-beta-lactamase type 2 (257 aa).

The first 30 residues, 1-30 (MKKNTLLKVGLCVSLLGTTQFVSTISSVQA), serve as a signal peptide directing secretion. The Zn(2+) site is built by His116, His118, Asp120, His179, and Cys198. Residues Lys201 and Asn210 each contribute to the substrate site. Residue His240 coordinates Zn(2+).

Belongs to the metallo-beta-lactamase superfamily. Class-B beta-lactamase family. As to quaternary structure, monomer. Zn(2+) is required as a cofactor.

It is found in the periplasm. The catalysed reaction is a beta-lactam + H2O = a substituted beta-amino acid. Its function is as follows. Confers resistance to the different beta-lactams antibiotics (penicillin, cephalosporin and carbapenem) via the hydrolysis of the beta-lactam ring. The sequence is that of Metallo-beta-lactamase type 2 from Bacillus sp. (strain 170).